The sequence spans 718 residues: DNA ligase (718 aa).

NAD(+) contacts are provided by residues 44–48 (DADYD), 93–94 (SL), and Glu127. Lys129 (N6-AMP-lysine intermediate) is an active-site residue. Positions 150, 186, 302, and 326 each coordinate NAD(+). Zn(2+) contacts are provided by Cys432, Cys435, Cys456, and Cys462. Residues 640-718 (TAGSPVAGKT…EDEWLALISG (79 aa)) enclose the BRCT domain.

The protein belongs to the NAD-dependent DNA ligase family. LigA subfamily. It depends on Mg(2+) as a cofactor. Mn(2+) is required as a cofactor.

The catalysed reaction is NAD(+) + (deoxyribonucleotide)n-3'-hydroxyl + 5'-phospho-(deoxyribonucleotide)m = (deoxyribonucleotide)n+m + AMP + beta-nicotinamide D-nucleotide.. Functionally, DNA ligase that catalyzes the formation of phosphodiester linkages between 5'-phosphoryl and 3'-hydroxyl groups in double-stranded DNA using NAD as a coenzyme and as the energy source for the reaction. It is essential for DNA replication and repair of damaged DNA. The sequence is that of DNA ligase from Rhizobium etli (strain CIAT 652).